Here is a 739-residue protein sequence, read N- to C-terminus: MEHTYQYAWIIPFLPFPVTISIGLGLLLVPTATKNLRRIWAFFSVLLLSIAMVFSADLAIQQINGSFIYQYSWSWTINNTFSLEFGYLIDPLTSIMLILITTVGIMVLIYSDNYMSHDQGYLRFFAYMSFFNTSMLGLVTSSNLIQIYIFWELVGMCSYLLIGFWFTRPTAANACQKAFVTNRVGDFGLLLGILGLYWITGSFEFRDLFEILKNLIHNNEVNSLFAALCASLLFVGAVAKSAQFPLHVWLPDAMEGPTPISALIHAATMVAAGIFLVARLLPLFTVIPYIMNFISLIGIITVLLGATLALAQRDIKRSLAYSTMSQLGYIMLAPGIGSYRAALFHLITHAYSKALLFLGSGSIIHSMEPIVGYSPEKSQNMILMGGLRRYVPITKTTFFLGTLSLCGMPPLACFWSKDEILNDTWLYSPIFAIIAWSTAGLTAFYMFRVYLLTFDGHLQVHFQNFSSTKNSSFYSISIWGKEVPKPLNVNLFLSTMNTNEKMSFFSKNTYQIDRNGKNRIRYFSTQFGNKYTSMYPHESDNTMLFPMLVLVLFTLFIGFIGIPFDQGVIDLDILSKWLTPSINLLHSNSGDSFDWYEFVTNAIYSVTISFLGIFLAYIFYGSVYSSFQNLDLINSFVRIDSKRILSDRIINGIYNWSYNRGYIDVFYGKVLSNTIRGLAELIHFFDRRVIDGITNGVGVVSFFVGEGIKSVGGGRISSYIFLYAFSVSICLIIYYFFSF.

The next 16 helical transmembrane spans lie at 9–29 (WIIPFLPFPVTISIGLGLLLV), 39–59 (IWAFFSVLLLSIAMVFSADLA), 89–109 (IDPLTSIMLILITTVGIMVLI), 125–145 (FAYMSFFNTSMLGLVTSSNLI), 147–167 (IYIFWELVGMCSYLLIGFWFT), 185–205 (GDFGLLLGILGLYWITGSFEF), 224–244 (LFAALCASLLFVGAVAKSAQF), 258–278 (TPISALIHAATMVAAGIFLVA), 280–300 (LLPLFTVIPYIMNFISLIGII), 327–347 (LGYIMLAPGIGSYRAALFHLI), 354–374 (ALLFLGSGSIIHSMEPIVGYS), 396–416 (TTFFLGTLSLCGMPPLACFWS), 425–445 (WLYSPIFAIIAWSTAGLTAFY), 544–564 (LFPMLVLVLFTLFIGFIGIPF), 603–623 (IYSVTISFLGIFLAYIFYGSV), and 719–739 (YIFLYAFSVSICLIIYYFFSF).

Belongs to the complex I subunit 5 family. As to quaternary structure, NDH is composed of at least 16 different subunits, 5 of which are encoded in the nucleus.

The protein localises to the plastid. The protein resides in the chloroplast thylakoid membrane. The catalysed reaction is a plastoquinone + NADH + (n+1) H(+)(in) = a plastoquinol + NAD(+) + n H(+)(out). It catalyses the reaction a plastoquinone + NADPH + (n+1) H(+)(in) = a plastoquinol + NADP(+) + n H(+)(out). Functionally, NDH shuttles electrons from NAD(P)H:plastoquinone, via FMN and iron-sulfur (Fe-S) centers, to quinones in the photosynthetic chain and possibly in a chloroplast respiratory chain. The immediate electron acceptor for the enzyme in this species is believed to be plastoquinone. Couples the redox reaction to proton translocation, and thus conserves the redox energy in a proton gradient. The polypeptide is NAD(P)H-quinone oxidoreductase subunit 5, chloroplastic (ndhF) (Acorus calamus var. americanus (American sweet flag)).